The chain runs to 142 residues: Putative pre-16S rRNA nuclease (142 aa).

The protein belongs to the YqgF nuclease family.

Its subcellular location is the cytoplasm. Could be a nuclease involved in processing of the 5'-end of pre-16S rRNA. The chain is Putative pre-16S rRNA nuclease from Photobacterium profundum (strain SS9).